The sequence spans 455 residues: Beta-glucosidase A (455 aa).

E165 functions as the Proton donor in the catalytic mechanism. E363 acts as the Nucleophile in catalysis.

It belongs to the glycosyl hydrolase 1 family.

It carries out the reaction Hydrolysis of terminal, non-reducing beta-D-glucosyl residues with release of beta-D-glucose.. This is Beta-glucosidase A (bglA) from Caldicellulosiruptor saccharolyticus (Caldocellum saccharolyticum).